Here is a 193-residue protein sequence, read N- to C-terminus: MPTTSRPALDVKGGTSPAKEDANQEMSSVAYSNLAVKDRKAVAILHYPGVASNGTKASGAPTSSSGSPIGSPTTTPPTKPPSFNLHPAPHLLASMHLQKLNSQYQGMAAATPGQPGEAGPLQNWDFGAQAGGAESLSPSAGAQSPAIIDSDPVDEEVLMSLVVELGLDRANELPELWLGQNEFDFTADFPSSC.

Disordered regions lie at residues 1 to 26 (MPTTSRPALDVKGGTSPAKEDANQEM), 50 to 88 (VASNGTKASGAPTSSSGSPIGSPTTTPPTKPPSFNLHPA), and 106 to 147 (GMAA…SPAI). Positions 54–73 (GTKASGAPTSSSGSPIGSPT) are enriched in low complexity. A Nuclear export signal motif is present at residues 158 to 167 (LMSLVVELGL).

This sequence belongs to the CITED family. In terms of assembly, interacts (via C-terminus) with CREBBP. Interacts with EGR2. Homodimer. Binds to RBM14. Interacts (via N-terminus) with HSPA8; the interaction suppresses the association of CITED1 with p300/CBP and SMAD-mediated transcription transactivation. Interacts (via C-terminus) with TOX3 (via HGM box); the interaction increases estrogen-response element (ERE)-dependent transcription and protection against cell death. Interacts with ESR1; the interaction occurs in a estrogen-dependent manner. Interacts (unphosphorylated form preferentially and via C-terminus) with EP300. Post-translationally, phosphorylated. Phosphorylation changes in a cell cycle-dependent manner and reduces its transcriptional coactivator activity. In terms of tissue distribution, expressed only in melanocytes and testis.

It localises to the nucleus. The protein resides in the cytoplasm. In terms of biological role, transcriptional coactivator of the p300/CBP-mediated transcription complex. Enhances SMAD-mediated transcription by strengthening the functional link between the DNA-binding SMAD transcription factors and the p300/CBP transcription coactivator complex. Stimulates estrogen-dependent transactivation activity mediated by estrogen receptors signaling; stabilizes the interaction of estrogen receptor ESR1 and histone acetyltransferase EP300. Positively regulates TGF-beta signaling through its association with the SMAD/p300/CBP-mediated transcriptional coactivator complex. Induces transcription from estrogen-responsive promoters and protection against cell death. Potentiates EGR2-mediated transcriptional activation activity from the ERBB2 promoter. Acts as an inhibitor of osteoblastic mineralization through a cAMP-dependent parathyroid hormone receptor signaling. May play a role in pigmentation of melanocytes. Associates with chromatin to the estrogen-responsive TGF-alpha promoter region in a estrogen-dependent manner. The chain is Cbp/p300-interacting transactivator 1 (CITED1) from Homo sapiens (Human).